Reading from the N-terminus, the 237-residue chain is Large ribosomal subunit protein uL1 (237 aa).

The protein belongs to the universal ribosomal protein uL1 family. Part of the 50S ribosomal subunit.

Binds directly to 23S rRNA. The L1 stalk is quite mobile in the ribosome, and is involved in E site tRNA release. In terms of biological role, protein L1 is also a translational repressor protein, it controls the translation of the L11 operon by binding to its mRNA. The protein is Large ribosomal subunit protein uL1 of Solibacter usitatus (strain Ellin6076).